The sequence spans 172 residues: Large ribosomal subunit protein uL10 (172 aa).

This sequence belongs to the universal ribosomal protein uL10 family. As to quaternary structure, part of the ribosomal stalk of the 50S ribosomal subunit. The N-terminus interacts with L11 and the large rRNA to form the base of the stalk. The C-terminus forms an elongated spine to which L12 dimers bind in a sequential fashion forming a multimeric L10(L12)X complex.

In terms of biological role, forms part of the ribosomal stalk, playing a central role in the interaction of the ribosome with GTP-bound translation factors. The sequence is that of Large ribosomal subunit protein uL10 (rplJ) from Liberibacter asiaticus (Citrus greening disease).